The sequence spans 158 residues: Anti-tumor lectin (158 aa).

Q1 is subject to Blocked amino end (Gln). In terms of domain architecture, Galectin spans 12 to 155 (TSVDLAAPVT…STVVEAVTYT (144 aa)). N-acetyl-alpha-neuraminyl-(2-&gt;3)-beta-D-galactosyl-(1-&gt;4)-beta-D-glucose-binding residues include N43, H59, R63, N72, R74, W80, and E83.

In terms of assembly, homodimer. As to expression, detected in the fruiting body.

Its function is as follows. Anti-tumor lectin with DNase activity. Inhibits the growth of several tumor cell lines in vitro. Induces lymphocyte infiltration and necrosis of tumor cells in a mouse tumor model. Induces apoptosis in HeLa cells. Binds N-acetylneuraminyl lactose (N-acetyl-alpha-neuraminyl-(2-&gt;3)-beta-D-galactosyl-(1-&gt;4)-beta-D-glucose). The polypeptide is Anti-tumor lectin (Cyclocybe aegerita (Black poplar mushroom)).